A 410-amino-acid polypeptide reads, in one-letter code: UDP-N-acetylglucosamine--N-acetylmuramyl-(pentapeptide) pyrophosphoryl-undecaprenol N-acetylglucosamine transferase (410 aa).

The segment at 1-34 (MKDTVSQPAGGRGATAPRPADAASPSCGSSPSAD) is disordered. Positions 14 to 34 (ATAPRPADAASPSCGSSPSAD) are enriched in low complexity. UDP-N-acetyl-alpha-D-glucosamine-binding positions include 45–47 (TAG), N167, R204, S238, and Q334.

It belongs to the glycosyltransferase 28 family. MurG subfamily.

The protein localises to the cell membrane. The catalysed reaction is di-trans,octa-cis-undecaprenyl diphospho-N-acetyl-alpha-D-muramoyl-L-alanyl-D-glutamyl-meso-2,6-diaminopimeloyl-D-alanyl-D-alanine + UDP-N-acetyl-alpha-D-glucosamine = di-trans,octa-cis-undecaprenyl diphospho-[N-acetyl-alpha-D-glucosaminyl-(1-&gt;4)]-N-acetyl-alpha-D-muramoyl-L-alanyl-D-glutamyl-meso-2,6-diaminopimeloyl-D-alanyl-D-alanine + UDP + H(+). The protein operates within cell wall biogenesis; peptidoglycan biosynthesis. Cell wall formation. Catalyzes the transfer of a GlcNAc subunit on undecaprenyl-pyrophosphoryl-MurNAc-pentapeptide (lipid intermediate I) to form undecaprenyl-pyrophosphoryl-MurNAc-(pentapeptide)GlcNAc (lipid intermediate II). The polypeptide is UDP-N-acetylglucosamine--N-acetylmuramyl-(pentapeptide) pyrophosphoryl-undecaprenol N-acetylglucosamine transferase (Mycobacterium bovis (strain ATCC BAA-935 / AF2122/97)).